The primary structure comprises 93 residues: Putative pterin-4-alpha-carbinolamine dehydratase (93 aa).

It belongs to the pterin-4-alpha-carbinolamine dehydratase family.

It catalyses the reaction (4aS,6R)-4a-hydroxy-L-erythro-5,6,7,8-tetrahydrobiopterin = (6R)-L-erythro-6,7-dihydrobiopterin + H2O. The protein is Putative pterin-4-alpha-carbinolamine dehydratase of Nostoc punctiforme (strain ATCC 29133 / PCC 73102).